Consider the following 179-residue polypeptide: ATP synthase subunit delta (179 aa).

This sequence belongs to the ATPase delta chain family. F-type ATPases have 2 components, F(1) - the catalytic core - and F(0) - the membrane proton channel. F(1) has five subunits: alpha(3), beta(3), gamma(1), delta(1), epsilon(1). F(0) has three main subunits: a(1), b(2) and c(10-14). The alpha and beta chains form an alternating ring which encloses part of the gamma chain. F(1) is attached to F(0) by a central stalk formed by the gamma and epsilon chains, while a peripheral stalk is formed by the delta and b chains.

The protein resides in the cell membrane. F(1)F(0) ATP synthase produces ATP from ADP in the presence of a proton or sodium gradient. F-type ATPases consist of two structural domains, F(1) containing the extramembraneous catalytic core and F(0) containing the membrane proton channel, linked together by a central stalk and a peripheral stalk. During catalysis, ATP synthesis in the catalytic domain of F(1) is coupled via a rotary mechanism of the central stalk subunits to proton translocation. Functionally, this protein is part of the stalk that links CF(0) to CF(1). It either transmits conformational changes from CF(0) to CF(1) or is implicated in proton conduction. The polypeptide is ATP synthase subunit delta (Clostridium botulinum (strain Alaska E43 / Type E3)).